The primary structure comprises 555 residues: Probable ferredoxin/ferredoxin--NADP reductase (555 aa).

2 consecutive 4Fe-4S ferredoxin-type domains span residues 2–29 and 37–66; these read PYIITQSCCNDGSCVFACPVNCIHPTPD and EMLYIDPVACVDCGACVSACPVGAIASDTR. [4Fe-4S] cluster contacts are provided by Cys9, Cys15, Cys19, Cys46, Cys49, Cys52, and Cys56. The tract at residues 115-555 is ferredoxin--NADP reductase; it reads VAIVGSGPAA…APPLRLRALS (441 aa). FAD contacts are provided by Ala123, Glu143, Leu151, and Ile187. NADP(+)-binding positions include Arg213, 258-261, 302-303, and Glu314; these read NGNV and RR. FAD contacts are provided by residues Trp453 and 460-462; that span reads GFI. Gly460 provides a ligand contact to NADP(+).

In the C-terminal section; belongs to the ferredoxin--NADP reductase family. [4Fe-4S] cluster is required as a cofactor. Requires FAD as cofactor.

It carries out the reaction 2 reduced [2Fe-2S]-[ferredoxin] + NADP(+) + H(+) = 2 oxidized [2Fe-2S]-[ferredoxin] + NADPH. The protein is Probable ferredoxin/ferredoxin--NADP reductase (fprB) of Mycobacterium leprae (strain TN).